Here is a 330-residue protein sequence, read N- to C-terminus: 6-methylsalicylic acid decarboxylase acuB (330 aa).

Zn(2+) contacts are provided by His-6, His-8, His-156, and Asp-276.

Belongs to the metallo-dependent hydrolases superfamily. ACMSD family. Monomer.

The protein localises to the cytoplasm. It localises to the cytosol. It catalyses the reaction 6-methylsalicylate + H(+) = 3-methylphenol + CO2. It functions in the pathway secondary metabolite biosynthesis. Functionally, 6-methylsalicylic acid decarboxylase; part of the gene cluster that mediates the biosynthesis of aculins. The pathway begins with the synthesis of 6-methylsalicylic acid by the polyketide synthase (PKS) acuA via condensation of acetate and malonate units. The 6-methylsalicylic acid decarboxylase acuB then catalyzes the decarboxylation of 6-methylsalicylic acid to yield m-cresol (also known as 3-methylphenol). These first reactions occur in the cytosol. The intermediate m-cresol is then transported into the endoplasmic reticulum where the cytochrome P450 monooxygenase acuC converts it to m-hydroxybenzyl alcohol, which is further converted to gentisyl alcohol by the cytochrome P450 monooxygenase acuD. Gentisyl alcohol is further oxidized by the oxidoreductase acuE that probably catalyzes hydroxylation of the aromatic ring. The aromatic system might then be opened by oxidation through a Baeyer-Villiger type of oxidation, which could be catalyzed by acuF, with the carboxylic acid at C-1 subsequently reduced to an aldehyde by acuG. Subsequently, a hemiacetal is formed, before the dehydrogenase acuH would reduce the double bond between C-4 and C-6. Finally, keto-enol tautomerism results in formation of aculinic acid, which exists as two diastereomers (both R/S configurations at C-1) by non-enzymatic hemiacetal formation. The carboxypeptidase acuI could be involved in the linking of aculinic acid to an aculene A moiety produced by the aculene biosynthesis cluster and which leads to the production of aculin A. AcuI may also be involved in the attachment of proline to aculinic acid to form epi-aculins A and B. This chain is 6-methylsalicylic acid decarboxylase acuB, found in Aspergillus aculeatus (strain ATCC 16872 / CBS 172.66 / WB 5094).